Consider the following 469-residue polypeptide: Protein RUFY3 (469 aa).

Residues T5 and T12 each carry the phosphothreonine modification. Phosphoserine is present on residues S34 and S49. A Phosphothreonine modification is found at T51. Positions 95–227 (DSDYAPLQQF…IDANFCMKGE (133 aa)) constitute an RUN domain. Coiled coils occupy residues 271-362 (NRHL…VEKE) and 422-463 (KSEL…AANK).

Interacts with PAK1. Interacts (via C-terminus) with Ras-related Rab-5 proteins. Interacts (via C-terminus) with Ras-related Rap-2 proteins. Interacts with PIK3CA and PIK3R1. Interacts (via N-terminus) with FSCN1; this interaction induces neuron axon development. Interacts with DBN1. Interacts (via the second coiled coil) with GTP-, but not GDP-bound ARL8A and ARL8B. Interacts with dynactin/DCTN1 and the dynein intermediate chain DYNC1I1/2. Directly interacts with DYNC1LI1. In terms of processing, isoform 1 is partially phosphorylated. Phosphorylated by PAK1. As to expression, expressed in brain (at protein level).

Its subcellular location is the cytoplasm. The protein resides in the endomembrane system. The protein localises to the cell projection. It localises to the invadopodium. It is found in the growth cone. Its subcellular location is the perikaryon. The protein resides in the filopodium. The protein localises to the lamellipodium. It localises to the lysosome. In terms of biological role, ARL8 effector that promotes the coupling of endolysosomes to dynein-dynactin for retrograde transport along microtubules. Acts by binding both GTP-bound ARL8 and dynein-dynactin. In nonneuronal cells, promotes concentration of endolysosomes in the juxtanuclear area. In hippocampal neurons, drives retrograde transport of endolysosomes from the axon to the soma. Plays a role in the generation of neuronal polarity formation and axon growth. Implicated in the formation of a single axon by developing neurons. May inhibit the formation of additional axons by inhibition of PI3K in minor neuronal processes. Plays a role in the formation of F-actin-enriched protrusive structures at the cell periphery. Plays a role in cytoskeletal organization by regulating the subcellular localization of FSCN1 and DBN1 at axonal growth cones. The sequence is that of Protein RUFY3 from Rattus norvegicus (Rat).